Here is a 314-residue protein sequence, read N- to C-terminus: Olfactory receptor 4K2 (314 aa).

The Extracellular segment spans residues 1–25 (MDVGNKSTMSEFVLLGLSNSWELQM). An N-linked (GlcNAc...) asparagine glycan is attached at N5. A helical transmembrane segment spans residues 26–49 (FFFMVFSLLYVATMVGNSLIVITV). At 50 to 57 (IVDPHLHS) the chain is on the cytoplasmic side. A helical membrane pass occupies residues 58–79 (PMYFLLTNLSIIDMSLASFATP). Residues 80–100 (KMITDYLTGHKTISFDGCLTQ) are Extracellular-facing. The cysteines at positions 97 and 189 are disulfide-linked. A helical transmembrane segment spans residues 101 to 120 (IFFLHLFTGTEIILLMAMSF). The Cytoplasmic portion of the chain corresponds to 121 to 139 (DRYIAICKPLHYASVISPQ). Residues 140 to 158 (VCVALVVASWIMGVMHSMS) form a helical membrane-spanning segment. Topologically, residues 159–195 (QVIFALTLPFCGPYEVDSFFCDLPVVFQLACVDTYVL) are extracellular. Residues 196–219 (GLFMISTSGIIALSCFIVLFNSYV) form a helical membrane-spanning segment. Topologically, residues 220 to 235 (IVLVTVKHHSSRGSSK) are cytoplasmic. Residues 236-258 (ALSTCTAHFIVVFLFFGPCIFIY) form a helical membrane-spanning segment. Topologically, residues 259–269 (MWPLSSFLTDK) are extracellular. Residues 270 to 289 (ILSVFYTIFTPTLNPIIYTL) form a helical membrane-spanning segment. The Cytoplasmic portion of the chain corresponds to 290 to 314 (RNQEVKIAMRKLKNRFLNFNKAMPS).

The protein belongs to the G-protein coupled receptor 1 family.

Its subcellular location is the cell membrane. Functionally, odorant receptor. In Homo sapiens (Human), this protein is Olfactory receptor 4K2 (OR4K2).